The chain runs to 293 residues: 4-diphosphocytidyl-2-C-methyl-D-erythritol kinase (293 aa).

Residue lysine 11 is part of the active site. 96 to 106 (PVAAGLGGGSS) contacts ATP. Aspartate 138 is an active-site residue.

This sequence belongs to the GHMP kinase family. IspE subfamily.

It carries out the reaction 4-CDP-2-C-methyl-D-erythritol + ATP = 4-CDP-2-C-methyl-D-erythritol 2-phosphate + ADP + H(+). It participates in isoprenoid biosynthesis; isopentenyl diphosphate biosynthesis via DXP pathway; isopentenyl diphosphate from 1-deoxy-D-xylulose 5-phosphate: step 3/6. Functionally, catalyzes the phosphorylation of the position 2 hydroxy group of 4-diphosphocytidyl-2C-methyl-D-erythritol. The polypeptide is 4-diphosphocytidyl-2-C-methyl-D-erythritol kinase (Xanthobacter autotrophicus (strain ATCC BAA-1158 / Py2)).